A 270-amino-acid polypeptide reads, in one-letter code: Calpain small subunit 1 (270 aa).

Met-1 is subject to N-acetylmethionine. Phosphoserine is present on Ser-6. In terms of domain architecture, EF-hand 1; atypical spans 98–132 (EEERQFRKLFVQLAGDDMEVSATELMNILNKVVTR). Positions 111, 114, 116, 121, 139, 154, 156, 158, 160, and 165 each coordinate Ca(2+). EF-hand domains are found at residues 141–174 (FGID…NNIK), 171–206 (NNIK…AGFH), 207–235 (LNQH…ISCL), and 236–270 (VRLD…TMYS). Lys-181 is subject to N6-acetyllysine. Ca(2+) contacts are provided by Asp-184, Asp-186, Ser-188, Thr-190, Glu-195, and Asp-227.

Homodimer or heterodimer of a large (catalytic) and a small (regulatory) subunit. In presence of calcium, the heterodimer dissociates.

It localises to the cytoplasm. The protein resides in the cell membrane. Regulatory subunit of the calcium-regulated non-lysosomal thiol-protease which catalyzes limited proteolysis of substrates involved in cytoskeletal remodeling and signal transduction. Essential for embryonic development. This Rattus norvegicus (Rat) protein is Calpain small subunit 1 (Capns1).